Here is a 419-residue protein sequence, read N- to C-terminus: UDP-N-acetylglucosamine 1-carboxyvinyltransferase (419 aa).

22-23 (KN) serves as a coordination point for phosphoenolpyruvate. R93 is a UDP-N-acetyl-alpha-D-glucosamine binding site. C117 serves as the catalytic Proton donor. Position 117 is a 2-(S-cysteinyl)pyruvic acid O-phosphothioketal (C117). D307 and I329 together coordinate UDP-N-acetyl-alpha-D-glucosamine.

Belongs to the EPSP synthase family. MurA subfamily.

Its subcellular location is the cytoplasm. The catalysed reaction is phosphoenolpyruvate + UDP-N-acetyl-alpha-D-glucosamine = UDP-N-acetyl-3-O-(1-carboxyvinyl)-alpha-D-glucosamine + phosphate. It participates in cell wall biogenesis; peptidoglycan biosynthesis. Cell wall formation. Adds enolpyruvyl to UDP-N-acetylglucosamine. This is UDP-N-acetylglucosamine 1-carboxyvinyltransferase from Shewanella putrefaciens (strain CN-32 / ATCC BAA-453).